A 246-amino-acid chain; its full sequence is Mitochondrial inner membrane protease ATP23 homolog (246 aa).

Position 125 (histidine 125) interacts with a divalent metal cation. Glutamate 126 is an active-site residue. Histidine 129 contributes to the a divalent metal cation binding site.

This sequence belongs to the peptidase M76 family. Interacts with XRCC6.

This Homo sapiens (Human) protein is Mitochondrial inner membrane protease ATP23 homolog.